Consider the following 494-residue polypeptide: Flagellin A (494 aa).

Belongs to the bacterial flagellin family. Heteromer of FlaA and FlaB. FlaB is located proximal to the hook while the remainder of the filament is composed of the predominant FlaA.

It localises to the secreted. The protein resides in the bacterial flagellum. In terms of biological role, flagellin is the subunit protein which polymerizes to form the filaments of bacterial flagella. Important for motility and virulence. The chain is Flagellin A (flaA) from Helicobacter mustelae.